Reading from the N-terminus, the 400-residue chain is Acetate kinase (400 aa).

Asn10 serves as a coordination point for Mg(2+). Position 17 (Lys17) interacts with ATP. A substrate-binding site is contributed by Arg91. Asp150 (proton donor/acceptor) is an active-site residue. ATP contacts are provided by residues 210-214 (HLGNG), 285-287 (DCR), and 333-337 (GIGEN). Glu387 serves as a coordination point for Mg(2+).

It belongs to the acetokinase family. Homodimer. Mg(2+) is required as a cofactor. Requires Mn(2+) as cofactor.

The protein localises to the cytoplasm. It carries out the reaction acetate + ATP = acetyl phosphate + ADP. It functions in the pathway metabolic intermediate biosynthesis; acetyl-CoA biosynthesis; acetyl-CoA from acetate: step 1/2. In terms of biological role, catalyzes the formation of acetyl phosphate from acetate and ATP. Can also catalyze the reverse reaction. This chain is Acetate kinase, found in Proteus mirabilis (strain HI4320).